The chain runs to 574 residues: Squalene monooxygenase (574 aa).

Topologically, residues 1–20 (MWTFLGIATFTYFYKKFGDF) are cytoplasmic. The segment at 1-100 (MWTFLGIATF…EQLEARRRRK (100 aa)) is interaction with MARCHF6. The stretch at 21-41 (ITLANREVLLCVLVFLSLGLV) is an intramembrane region. Residues 42–574 (LSYRCRHRNG…IYSEMKYMVH (533 aa)) lie on the Cytoplasmic side of the membrane. The segment at 62–73 (QFALFSDILSGL) is required for degradation in response to high membrane cholesterol levels. The sufficient for enzyme activity stretch occupies residues 118 to 574 (TSSQNDPEVI…IYSEMKYMVH (457 aa)). Residues 133 to 134 (VL), 153 to 154 (ER), Arg161, Phe166, Arg234, Val250, Asp408, and Met421 each bind FAD. Residues 516 to 574 (PLVLIGHFFAVAIYAVYFCFKSEPWITKPRALLSSGAVLYKACSVIFPLIYSEMKYMVH) form a hydrophobic; mediates interaction with membranes region.

This sequence belongs to the squalene monooxygenase family. As to quaternary structure, interacts (via N-terminal domain) with MARCHF6. Interacts with SMIM22; this interaction modulates lipid droplet formation. The cofactor is FAD. In terms of processing, ubiquitinated by MARCHF6 in response to high cholesterol levels in intracellular membranes, leading to proteasomal degradation. In terms of tissue distribution, detected in liver (at protein level).

Its subcellular location is the microsome membrane. It localises to the endoplasmic reticulum membrane. The catalysed reaction is squalene + reduced [NADPH--hemoprotein reductase] + O2 = (S)-2,3-epoxysqualene + oxidized [NADPH--hemoprotein reductase] + H2O + H(+). It participates in terpene metabolism; lanosterol biosynthesis; lanosterol from farnesyl diphosphate: step 2/3. Inhibited by NB-598 ((E)N-ethyl-N-(6,6-dimethyl-2-hepten-4-ynyl)-3-[(3,3'-bi-thiophen-5-yl)methoxy]benzene-methanamine). Contrary to fungal enzymes, the mammalian enzyme is only slightly inhibited by terbinafine. Inhibited by tellurite, tellurium dioxide, selenite, and selenium dioxide. Functionally, catalyzes the stereospecific oxidation of squalene to (S)-2,3-epoxysqualene, and is considered to be a rate-limiting enzyme in steroid biosynthesis. This Homo sapiens (Human) protein is Squalene monooxygenase (SQLE).